We begin with the raw amino-acid sequence, 335 residues long: Dihydroorotate dehydrogenase (quinone) (335 aa).

Residues 59-63 (AGLDK) and Thr83 each bind FMN. Residue Lys63 coordinates substrate. 108-112 (NRMGF) is a binding site for substrate. FMN is bound by residues Asn136 and Asn169. Residue Asn169 participates in substrate binding. Ser172 acts as the Nucleophile in catalysis. Asn174 serves as a coordination point for substrate. 2 residues coordinate FMN: Lys214 and Thr242. 243-244 (NT) provides a ligand contact to substrate. Residues Gly265, Gly294, and 315–316 (YS) contribute to the FMN site.

This sequence belongs to the dihydroorotate dehydrogenase family. Type 2 subfamily. Monomer. The cofactor is FMN.

The protein resides in the cell membrane. It carries out the reaction (S)-dihydroorotate + a quinone = orotate + a quinol. It functions in the pathway pyrimidine metabolism; UMP biosynthesis via de novo pathway; orotate from (S)-dihydroorotate (quinone route): step 1/1. In terms of biological role, catalyzes the conversion of dihydroorotate to orotate with quinone as electron acceptor. This Neisseria gonorrhoeae (strain ATCC 700825 / FA 1090) protein is Dihydroorotate dehydrogenase (quinone).